A 292-amino-acid chain; its full sequence is MSMPATSTKTTKLATSLIDEYALLGWRAMLTEVNLSPKPGLVDRINCGAHKDMALEDFHRSALAIQGWLPRFIEFGACSAEIAPEAVLHGLRPIGMACEGDMFRATAGVNTHKGSIFSLGLLCAAIGRLLQLNQPVTPTTVCSTAASFCRGLTDRELRTNNSQLTAGQRLYQQLGLTGARGEAEAGYPLVINHALPHYLTLLDQGLDPELALLDTLLLLMAINGDTNVASRGGEGGLRWLQREAQTLLQKGGIRTPADLDYLRQFDRECIERNLSPGGSADLLILTWFLAQI.

This sequence belongs to the CitG/MdcB family.

It catalyses the reaction 3'-dephospho-CoA + ATP = 2'-(5''-triphospho-alpha-D-ribosyl)-3'-dephospho-CoA + adenine. The chain is Probable 2-(5''-triphosphoribosyl)-3'-dephosphocoenzyme-A synthase from Shigella sonnei (strain Ss046).